A 188-amino-acid polypeptide reads, in one-letter code: Cell division protein ZapC (188 aa).

Belongs to the ZapC family. Interacts directly with FtsZ.

It is found in the cytoplasm. Its function is as follows. Contributes to the efficiency of the cell division process by stabilizing the polymeric form of the cell division protein FtsZ. Acts by promoting interactions between FtsZ protofilaments and suppressing the GTPase activity of FtsZ. This chain is Cell division protein ZapC, found in Psychromonas ingrahamii (strain DSM 17664 / CCUG 51855 / 37).